The chain runs to 1228 residues: Nitrate reductase alpha chain (1228 aa).

Residues 47-111 form the 4Fe-4S Mo/W bis-MGD-type domain; it reads DKVVRSTHGV…SFSWYIYSPL (65 aa). His-54, Cys-58, Cys-62, and Cys-97 together coordinate [4Fe-4S] cluster. Mo-bis(molybdopterin guanine dinucleotide) is bound at residue Asp-227.

The protein belongs to the prokaryotic molybdopterin-containing oxidoreductase family. The cofactor is [4Fe-4S] cluster. Mo-bis(molybdopterin guanine dinucleotide) is required as a cofactor.

Its subcellular location is the cell membrane. It carries out the reaction nitrate + a quinol = a quinone + nitrite + H2O. Its function is as follows. The alpha chain is the actual site of nitrate reduction. This Bacillus subtilis (strain 168) protein is Nitrate reductase alpha chain (narG).